We begin with the raw amino-acid sequence, 215 residues long: Ribonuclease T (215 aa).

The 175-residue stretch at 21-195 (VVIDVETAGF…YDSKKTAELF (175 aa)) folds into the Exonuclease domain. Mg(2+) contacts are provided by Asp24, Glu26, His182, and Asp187. The active-site Proton donor/acceptor is the His182.

Belongs to the RNase T family. Homodimer. The cofactor is Mg(2+).

Its function is as follows. Trims short 3' overhangs of a variety of RNA species, leaving a one or two nucleotide 3' overhang. Responsible for the end-turnover of tRNA: specifically removes the terminal AMP residue from uncharged tRNA (tRNA-C-C-A). Also appears to be involved in tRNA biosynthesis. This Wigglesworthia glossinidia brevipalpis protein is Ribonuclease T.